Reading from the N-terminus, the 448-residue chain is MAAQIKKYITSDELKNHDKPGDLWISIQGKAYDVSDWVKDHPGGSFPLKSLAGQEVTDAFVAFHPASTWKNLDKFFTGYYLKDYSVSEVSKDYRKLVFEFSKMGLYDKKGHIMFATLCFIAMLFAMSVYGVLFCEGVLVHLFSGCLMGFLWIQSGWIGHDAGHYMVVSDSRLNKFMGIFAANCLSGISIGWWKWNHNAHHIACNSLEYDPDLQYIPFLVVSSKFFGSLTSHFYEKRLTFDSLSRFFVSYQHWTFYPIMCAARLNMYVQSLIMLLTKRNVSYRAHELLGCLVFSIWYPLLVSCLPNWGERIMFVIASLSVTGMQQVQFSLNHFSSSVYVGKPKGNNWFEKQTDGTLDISCPPWMDWFHGGLQFQIEHHLFPKMPRCNLRKISPYVIELCKKHNLPYNYASFSKANEMTLRTLRNTALQARDITKPLPKNLVWEALHTHG.

In terms of domain architecture, Cytochrome b5 heme-binding spans 6–90 (KKYITSDELK…LKDYSVSEVS (85 aa)). 2 residues coordinate heme: histidine 41 and histidine 64. The next 2 helical transmembrane spans lie at 112–132 (IMFATLCFIAMLFAMSVYGVL) and 137–157 (VLVHLFSGCLMGFLWIQSGWI). The short motif at 159–163 (HDAGH) is the Histidine box-1 element. A helical membrane pass occupies residues 172–192 (LNKFMGIFAANCLSGISIGWW). The Histidine box-2 motif lies at 196-200 (HNAHH). 3 helical membrane-spanning segments follow: residues 212–232 (LQYIPFLVVSSKFFGSLTSHF), 254–274 (FYPIMCAARLNMYVQSLIMLL), and 286–306 (LLGCLVFSIWYPLLVSCLPNW). Residues 373 to 377 (QIEHH) carry the Histidine box-3 motif.

It belongs to the fatty acid desaturase type 1 family.

It localises to the endoplasmic reticulum membrane. It catalyses the reaction (9Z,12Z,15Z)-octadecatrienoyl-containing glycerolipid + 2 Fe(II)-[cytochrome b5] + O2 + 2 H(+) = (6Z,9Z,12Z,15Z)-octadecatetraenoyl-containing glycerolipid + 2 Fe(III)-[cytochrome b5] + 2 H2O. It carries out the reaction a (9Z,12Z)-octadecadienoyl-containing glycerolipid + 2 Fe(II)-[cytochrome b5] + O2 + 2 H(+) = (6Z,9Z,12Z)-octadecatrienoyl-containing glycerolipid + 2 Fe(III)-[cytochrome b5] + 2 H2O. The protein operates within lipid metabolism; polyunsaturated fatty acid biosynthesis. Its function is as follows. Fatty acid desaturase able to introduce a delta(6)-double bond into delta(9)-unsaturated fatty-acid substrates. Can use both linoleic acid (18:2(9Z,12Z)) and alpha-linolenic acid (18:3(9Z,12Z,15Z)) as substrates. This chain is Acyl-lipid (9-3)-desaturase, found in Borago officinalis (Bourrache).